The sequence spans 1097 residues: Transmembrane protein 132D (1097 aa).

The N-terminal stretch at 1-30 (MCPSEMGTLWYLWSPVLISLAALFSKVTEG) is a signal peptide. At 31–913 (RGILESIQRF…PDQAAKGLSD (883 aa)) the chain is on the extracellular side. A compositionally biased stretch (basic and acidic residues) spans 233-245 (DERGDCAKEDSRK). Disordered stretches follow at residues 233–263 (DERG…SPPL) and 885–906 (SFPD…DPDQ). The chain crosses the membrane as a helical span at residues 914-934 (LEIGMYALLGVFCLAILVFLI). At 935-1097 (NCVTFALKYR…SCMERLHEHV (163 aa)) the chain is on the cytoplasmic side. The tract at residues 1021–1042 (MLTDDKEQKSEPPTSPTSKRKR) is disordered.

The protein belongs to the TMEM132 family. As to expression, expressed in mature oligodendrocytes in the brain.

The protein resides in the membrane. In terms of biological role, regulates neuronal morphology via inhibition of the WAVE regulatory complex (WCR), a complex that controls F-actin cytoskeletal dynamics. In Rattus norvegicus (Rat), this protein is Transmembrane protein 132D (Tmem132d).